We begin with the raw amino-acid sequence, 2792 residues long: E3 ubiquitin-protein ligase UBR5 (2792 aa).

N-acetylthreonine is present on threonine 2. A compositionally biased stretch (basic and acidic residues) spans 77–88 (DRLELGKPDNND). The interval 77–175 (DRLELGKPDN…DRGSGLLGSQ (99 aa)) is disordered. The segment covering 94 to 111 (SSSGTGRTSRPGRTSDSP) has biased composition (low complexity). Phosphoserine is present on serine 110. Residues 135-144 (GVGGSGGGSS) are compositionally biased toward gly residues. A UBA domain is found at 184 to 226 (VIPEELISQAQVVLQGKSRSVIIRELQRTNLDVNLAVNNLLSR). At serine 321 the chain carries Phosphoserine. The segment covering 322–341 (FDNERGSTSKEGESNPDKKN) has biased composition (basic and acidic residues). The interval 322–347 (FDNERGSTSKEGESNPDKKNTPVQSP) is disordered. Residues serine 346 and serine 572 each carry the phosphoserine modification. A compositionally biased stretch (basic and acidic residues) spans 577–598 (KSMEKASKTLETKPESKQEPVK). The interval 577–642 (KSMEKASKTL…APREEEKVNE (66 aa)) is disordered. Residue serine 606 is modified to Phosphoserine. The span at 608 to 622 (ASTCSDASSIASSAS) shows a compositional bias: low complexity. Phosphothreonine is present on threonine 631. Phosphoserine is present on residues serine 802, serine 922, and serine 1012. 2 disordered regions span residues 993–1029 (AGLGRHEAGASSSDHQDPVSPPIAPPSWVPDPPSMDP) and 1046–1069 (TAATGSGQGPSTSTIPGPSTEPSV). The span at 1011-1027 (VSPPIAPPSWVPDPPSM) shows a compositional bias: pro residues. Polar residues predominate over residues 1046–1067 (TAATGSGQGPSTSTIPGPSTEP). Phosphothreonine is present on residues threonine 1109 and threonine 1129. The segment at 1171–1239 (DTCSFTWTGA…EKCKCKTLIA (69 aa)) adopts a UBR-type zinc-finger fold. Phosphoserine occurs at positions 1221, 1302, 1349, 1369, and 1475. The segment at 1293 to 1312 (REDRNRKTASPEDSDMPDHD) is disordered. The segment at 1509-1734 (SVEPLPPRPS…PSSTSTPAAS (226 aa)) is disordered. The segment covering 1518 to 1531 (SSDQASSSSQSQSS) has biased composition (low complexity). A compositionally biased stretch (polar residues) spans 1532 to 1547 (YIIRNPQQRRISQSQP). Serine 1543 is subject to Phosphoserine. Composition is skewed to acidic residues over residues 1553–1568 (EEQDDIVSADVEEVEV) and 1599–1608 (HDEDGSDMEL). The span at 1623-1632 (NHSNQDNASG) shows a compositional bias: polar residues. 3 stretches are compositionally biased toward low complexity: residues 1635–1651 (SVVTAATAGSEAGASSV), 1662–1675 (SNDSSDSDSSSSQS), and 1720–1734 (AASTAPSSTSTPAAS). A Phosphothreonine modification is found at threonine 1730. Residue serine 1735 is modified to Phosphoserine. Tyrosine 1740 carries the post-translational modification Phosphotyrosine. Serine 1774 is modified (phosphoserine). The tract at residues 1853 to 1884 (LASAGDPGHPNHPLHASQNSARRERMTAREEA) is disordered. The segment covering 1873–1884 (ARRERMTAREEA) has biased composition (basic and acidic residues). Threonine 1963 bears the Phosphothreonine mark. The disordered stretch occupies residues 1978–2015 (GIDNEDSEHENDDDTSQSATLNDKDDDSLPAETGQNHP). Acidic residues predominate over residues 1979 to 1992 (IDNEDSEHENDDDT). 3 positions are modified to phosphoserine: serine 1984, serine 2020, and serine 2022. Threonine 2024 is subject to Phosphothreonine. A Phosphoserine modification is found at serine 2070. Residues 2111 to 2137 (RQKKEGEEQSLLAEEADSSKPGPSAPD) are disordered. Threonine 2207 carries the phosphothreonine modification. Residues serine 2235 and serine 2283 each carry the phosphoserine modification. A disordered region spans residues 2317 to 2387 (HTSLMQRLRN…SDDPDPLPAH (71 aa)). Composition is skewed to basic and acidic residues over residues 2326–2342 (NRGERDREREREREMRR) and 2350–2362 (SRRDRDRDFRRQL). One can recognise a PABC domain in the interval 2371–2448 (PASEGNPSDD…AMELIIAHGR (78 aa)). The region spanning 2455–2792 (ILDLGLLDSS…AIKTKNFGFV (338 aa)) is the HECT domain. A phosphoserine mark is found at serine 2463, serine 2477, and serine 2479. The tract at residues 2467–2494 (VQENRKRHGSSRSVVDMDLEDTDDGDDN) is disordered. The segment covering 2483–2493 (MDLEDTDDGDD) has biased composition (acidic residues). Cysteine 2761 serves as the catalytic Glycyl thioester intermediate.

It belongs to the UBR5 family. As to quaternary structure, homotetramer; composed of a dimer of dimers. Associates with CDK9 and TFIIS/TCEA1 and forms a transcription regulatory complex made of CDK9, RNAP II, UBR5 and TFIIS/TCEA1 that can stimulate target gene transcription (e.g. gamma fibrinogen/FGG) by recruiting their promoters. Associates with the E3 ligase complex containing DYRK2, EDD/UBR5, DDB1 and DCAF1 proteins (EDVP complex). Binds TOPBP1. Interacts with PIH1D1. Interacts with CIB1.

The protein localises to the nucleus. Its subcellular location is the cytoplasm. It catalyses the reaction S-ubiquitinyl-[E2 ubiquitin-conjugating enzyme]-L-cysteine + [acceptor protein]-L-lysine = [E2 ubiquitin-conjugating enzyme]-L-cysteine + N(6)-ubiquitinyl-[acceptor protein]-L-lysine.. Its pathway is protein modification; protein ubiquitination. In terms of biological role, E3 ubiquitin-protein ligase involved in different protein quality control pathways in the cytoplasm and nucleus. Mainly acts as a ubiquitin chain elongator that extends pre-ubiquitinated substrates. Component of the N-end rule pathway: ubiquitinates proteins bearing specific N-terminal residues that are destabilizing according to the N-end rule, leading to their degradation. Recognizes type-1 N-degrons, containing positively charged amino acids (Arg, Lys and His). Together with UBR4, part of a cytoplasm protein quality control pathway that prevents protein aggregation by catalyzing assembly of heterotypic 'Lys-11'-/'Lys-48'-linked branched ubiquitin chains on aggregated proteins, leading to substrate recognition by the segregase p97/VCP and degradation by the proteasome: UBR5 is probably branching multiple 'Lys-48'-linked chains of substrates initially modified with mixed conjugates by UBR4. Together with ITCH, catalyzes 'Lys-48'-/'Lys-63'-branched ubiquitination of TXNIP, leading to its degradation: UBR5 mediates branching of 'Lys-48'-linked chains of substrates initially modified with 'Lys-63'-linked conjugates by ITCH. Catalytic component of a nuclear protein quality control pathway that mediates ubiquitination and degradation of unpaired transcription factors (i.e. transcription factors that are not assembled into functional multiprotein complexes): specifically recognizes and binds degrons that are not accessible when transcription regulators are associated with their coactivators. Ubiquitinates various unpaired transcription regulator (MYC, SUPT4H1, SUPT5H, CDC20 and MCRS1), as well as ligand-bound nuclear receptors (ESR1, NR1H3, NR3C1, PGR, RARA, RXRA AND VDR) that are not associated with their nuclear receptor coactivators (NCOAs). Involved in maturation and/or transcriptional regulation of mRNA by mediating polyubiquitination and activation of CDK9. Also acts as a regulator of DNA damage response by acting as a suppressor of RNF168, an E3 ubiquitin-protein ligase that promotes accumulation of 'Lys-63'-linked histone H2A and H2AX at DNA damage sites, thereby acting as a guard against excessive spreading of ubiquitinated chromatin at damaged chromosomes. Regulates DNA topoisomerase II binding protein (TopBP1) in the DNA damage response. Ubiquitinates acetylated PCK1. Acts as a positive regulator of the canonical Wnt signaling pathway by mediating (1) ubiquitination and stabilization of CTNNB1, and (2) 'Lys-48'-linked ubiquitination and degradation of TLE3. Promotes disassembly of the mitotic checkpoint complex (MCC) from the APC/C complex by catalyzing ubiquitination of BUB1B, BUB3 and CDC20. Plays an essential role in extraembryonic development. Required for the maintenance of skeletal tissue homeostasis by acting as an inhibitor of hedgehog (HH) signaling. The polypeptide is E3 ubiquitin-protein ligase UBR5 (Mus musculus (Mouse)).